The sequence spans 110 residues: Holo-[acyl-carrier-protein] synthase (110 aa).

Residues aspartate 8 and glutamate 54 each coordinate Mg(2+).

This sequence belongs to the P-Pant transferase superfamily. AcpS family. Mg(2+) is required as a cofactor.

The protein localises to the cytoplasm. It catalyses the reaction apo-[ACP] + CoA = holo-[ACP] + adenosine 3',5'-bisphosphate + H(+). Functionally, transfers the 4'-phosphopantetheine moiety from coenzyme A to a Ser of acyl-carrier-protein. The chain is Holo-[acyl-carrier-protein] synthase from Mycoplasma capricolum subsp. capricolum (strain California kid / ATCC 27343 / NCTC 10154).